The primary structure comprises 822 residues: Adhesion G protein-coupled receptor E2 (822 aa).

Residues 1 to 18 (MGGRVFLAFCVWLTLLGA) form the signal peptide. Topologically, residues 19–530 (ETQDSRDCAR…DVQEEDPVLT (512 aa)) are extracellular. The EGF-like 1 domain occupies 22-63 (DSRDCARWCPENSSCVNATACRCNPGFSSSSEIFTSPTEICD). Intrachain disulfides connect C26-C36, C30-C42, C44-C62, C68-C82, and C76-C91. N-linked (GlcNAc...) asparagine glycans are attached at residues N33 and N38. An EGF-like 1; calcium-binding domain is found at 64–103 (DINECVPPSKVSCGKSSDCRNTEGSYDCVCNPGYELVSGA). N108 carries an N-linked (GlcNAc...) asparagine glycan. Residues 116–159 (DVDECQQNPRLCKSYGTCVNTLGSFTCQCLPGFKFKPEDPKLCT) form the EGF-like 2; calcium-binding domain. Cystine bridges form between C120/C133, C127/C142, C144/C158, C164/C177, and C171/C186. In terms of domain architecture, EGF-like 3; calcium-binding spans 160–198 (DVNECTSGQNPCHSSTHCLNNVGSYQCRCRPGWQPIPGS). N-linked (GlcNAc...) asparagine glycosylation is found at N203, N222, N351, N371, N427, N449, and N453. The 39-residue stretch at 209–247 (DVDECSSGLHQCDNSTVCFNTVGSYTCRCRPGWEPKHGI) folds into the EGF-like 4; calcium-binding domain. 2 cysteine pairs are disulfide-bonded: C213–C226 and C220–C235. One can recognise a GAIN-B domain in the interval 351–523 (NFSYPAGTEF…AVLMAPYDVQ (173 aa)). Intrachain disulfides connect C475/C505 and C493/C507. Positions 475 to 523 (CVFWEHGQNGCGHWATTGCSTMDTRDTSTICRCTHLSSFAVLMAPYDVQ) are GPS. Residues 531 to 551 (VITYMGLSLSLLCLLLAALTF) traverse the membrane as a helical segment. Topologically, residues 552–562 (LLCKAIQNIST) are cytoplasmic. Residues 563–583 (SLHLQLSLCLLLAHLLFLVAI) form a helical membrane-spanning segment. Over 584-589 (DRTEHE) the chain is Extracellular. A helical transmembrane segment spans residues 590–610 (VLCAIIASALHYLYLAAFTWM). Topologically, residues 611-637 (LLEALYLFLTARNLMVVNYSSINRFTK) are cytoplasmic. A helical membrane pass occupies residues 638-658 (KLMFPVAYGVPAVTVAISAAS). The Extracellular portion of the chain corresponds to 659–676 (RPHLYGTPSRCWLQPEKG). A helical transmembrane segment spans residues 677–697 (FIWGFLGPVCAIFSVNLALLL). At 698-728 (VTLWILKNRLSSLNNEVSTLQNTRMLAFKAT) the chain is on the cytoplasmic side. A helical transmembrane segment spans residues 729–749 (AQLFILGCTWCLGILQVGPAA). Residues 750–753 (RVMA) are Extracellular-facing. The helical transmembrane segment at 754–774 (YLFTIINSLQGVFIFLVYCLL) threads the bilayer. Residues 775–822 (SQQVREQYRKWSKGFRKLRTESEMHTLSSSAKRDTPKPSTPGLLGLQS) lie on the Cytoplasmic side of the membrane. Residues 797–822 (EMHTLSSSAKRDTPKPSTPGLLGLQS) form a disordered region.

This sequence belongs to the G-protein coupled receptor 2 family. Adhesion G-protein coupled receptor (ADGR) subfamily. As to quaternary structure, forms a heterodimer, consisting of a large extracellular region non-covalently linked to a seven-transmembrane moiety. Interacts with chondroitin sulfate; the interaction with chondroitin sulfate is calcium-dependent. Interacts with CD55. Autoproteolytically cleaved into 2 subunits, an extracellular alpha subunit and a seven-transmembrane beta subunit.

It is found in the cell membrane. The protein localises to the cell projection. The protein resides in the ruffle membrane. Cell surface receptor that binds to the chondroitin sulfate moiety of glycosaminoglycan chains and promotes cell attachment. Promotes granulocyte chemotaxis, degranulation and adhesion. In macrophages, promotes the release of inflammatory cytokines, including IL8 and TNF. Signals probably through G-proteins. This chain is Adhesion G protein-coupled receptor E2 (ADGRE2), found in Macaca mulatta (Rhesus macaque).